Consider the following 152-residue polypeptide: Protein-export protein SecB (152 aa).

It belongs to the SecB family. In terms of assembly, homotetramer, a dimer of dimers. One homotetramer interacts with 1 SecA dimer.

It is found in the cytoplasm. In terms of biological role, one of the proteins required for the normal export of preproteins out of the cell cytoplasm. It is a molecular chaperone that binds to a subset of precursor proteins, maintaining them in a translocation-competent state. It also specifically binds to its receptor SecA. This chain is Protein-export protein SecB, found in Rickettsia peacockii (strain Rustic).